A 494-amino-acid chain; its full sequence is Bifunctional pantoate ligase/cytidylate kinase (494 aa).

Residues methionine 1–alanine 258 form a pantoate--beta-alanine ligase region. Position 7–14 (methionine 7–histidine 14) interacts with ATP. Histidine 14 functions as the Proton donor in the catalytic mechanism. Residue glutamine 41 coordinates (R)-pantoate. Residue glutamine 41 participates in beta-alanine binding. Glycine 130–aspartate 133 is an ATP binding site. Glutamine 136 contributes to the (R)-pantoate binding site. ATP is bound by residues valine 159 and serine 167–arginine 170. Residues phenylalanine 259 to valine 494 are cytidylate kinase.

In the N-terminal section; belongs to the pantothenate synthetase family. It in the C-terminal section; belongs to the cytidylate kinase family. Type 1 subfamily.

It is found in the cytoplasm. The enzyme catalyses (R)-pantoate + beta-alanine + ATP = (R)-pantothenate + AMP + diphosphate + H(+). It catalyses the reaction CMP + ATP = CDP + ADP. It carries out the reaction dCMP + ATP = dCDP + ADP. It participates in cofactor biosynthesis; (R)-pantothenate biosynthesis; (R)-pantothenate from (R)-pantoate and beta-alanine: step 1/1. Catalyzes the condensation of pantoate with beta-alanine in an ATP-dependent reaction via a pantoyl-adenylate intermediate. Its function is as follows. Catalyzes the transfer of a phosphate group from ATP to either CMP or dCMP to form CDP or dCDP and ADP, respectively. The chain is Bifunctional pantoate ligase/cytidylate kinase from Synechococcus sp. (strain CC9311).